Here is a 251-residue protein sequence, read N- to C-terminus: Glucosamine-6-phosphate deaminase (251 aa).

Aspartate 73 (proton acceptor; for enolization step) is an active-site residue. Asparagine 142 (for ring-opening step) is an active-site residue. Histidine 144 acts as the Proton acceptor; for ring-opening step in catalysis. The active-site For ring-opening step is the glutamate 149.

Belongs to the glucosamine/galactosamine-6-phosphate isomerase family. NagB subfamily.

It catalyses the reaction alpha-D-glucosamine 6-phosphate + H2O = beta-D-fructose 6-phosphate + NH4(+). It participates in amino-sugar metabolism; N-acetylneuraminate degradation; D-fructose 6-phosphate from N-acetylneuraminate: step 5/5. Functionally, catalyzes the reversible isomerization-deamination of glucosamine 6-phosphate (GlcN6P) to form fructose 6-phosphate (Fru6P) and ammonium ion. In Rhodopirellula baltica (strain DSM 10527 / NCIMB 13988 / SH1), this protein is Glucosamine-6-phosphate deaminase.